Here is a 432-residue protein sequence, read N- to C-terminus: Glutamyl-tRNA reductase (432 aa).

Residues threonine 55–arginine 58, serine 114, glutamate 119–glutamine 121, and glutamine 125 contribute to the substrate site. Cysteine 56 serves as the catalytic Nucleophile. Position 194-199 (glycine 194–isoleucine 199) interacts with NADP(+).

It belongs to the glutamyl-tRNA reductase family. In terms of assembly, homodimer.

The enzyme catalyses (S)-4-amino-5-oxopentanoate + tRNA(Glu) + NADP(+) = L-glutamyl-tRNA(Glu) + NADPH + H(+). The protein operates within porphyrin-containing compound metabolism; protoporphyrin-IX biosynthesis; 5-aminolevulinate from L-glutamyl-tRNA(Glu): step 1/2. Functionally, catalyzes the NADPH-dependent reduction of glutamyl-tRNA(Glu) to glutamate 1-semialdehyde (GSA). This Burkholderia cenocepacia (strain ATCC BAA-245 / DSM 16553 / LMG 16656 / NCTC 13227 / J2315 / CF5610) (Burkholderia cepacia (strain J2315)) protein is Glutamyl-tRNA reductase.